The primary structure comprises 1370 residues: DNA-directed RNA polymerase subunit beta (1370 aa).

This sequence belongs to the RNA polymerase beta chain family. As to quaternary structure, the RNAP catalytic core consists of 2 alpha, 1 beta, 1 beta' and 1 omega subunit. When a sigma factor is associated with the core the holoenzyme is formed, which can initiate transcription.

It carries out the reaction RNA(n) + a ribonucleoside 5'-triphosphate = RNA(n+1) + diphosphate. DNA-dependent RNA polymerase catalyzes the transcription of DNA into RNA using the four ribonucleoside triphosphates as substrates. The chain is DNA-directed RNA polymerase subunit beta from Delftia acidovorans (strain DSM 14801 / SPH-1).